Here is a 212-residue protein sequence, read N- to C-terminus: Thymidylate kinase (212 aa).

11 to 18 (GPDGAGKS) is a binding site for ATP.

It belongs to the thymidylate kinase family.

It catalyses the reaction dTMP + ATP = dTDP + ADP. Its function is as follows. Phosphorylation of dTMP to form dTDP in both de novo and salvage pathways of dTTP synthesis. This is Thymidylate kinase from Streptococcus gordonii (strain Challis / ATCC 35105 / BCRC 15272 / CH1 / DL1 / V288).